The primary structure comprises 317 residues: Phospho-N-acetylmuramoyl-pentapeptide-transferase (317 aa).

The next 9 membrane-spanning stretches (helical) occupy residues 6 to 26 (IVMA…IIIP), 52 to 72 (PTIG…IMVG), 78 to 98 (AMIA…DDLL), 114 to 134 (MILL…YIGT), 145 to 165 (INFG…VTNA), 171 to 191 (GLDG…GIIS), 194 to 214 (LGHI…LAFL), 223 to 244 (VFMG…ALIL), and 297 to 317 (KIVS…FASL).

It belongs to the glycosyltransferase 4 family. MraY subfamily. Mg(2+) serves as cofactor.

The protein localises to the cell membrane. The enzyme catalyses UDP-N-acetyl-alpha-D-muramoyl-L-alanyl-gamma-D-glutamyl-meso-2,6-diaminopimeloyl-D-alanyl-D-alanine + di-trans,octa-cis-undecaprenyl phosphate = di-trans,octa-cis-undecaprenyl diphospho-N-acetyl-alpha-D-muramoyl-L-alanyl-D-glutamyl-meso-2,6-diaminopimeloyl-D-alanyl-D-alanine + UMP. It participates in cell wall biogenesis; peptidoglycan biosynthesis. Catalyzes the initial step of the lipid cycle reactions in the biosynthesis of the cell wall peptidoglycan: transfers peptidoglycan precursor phospho-MurNAc-pentapeptide from UDP-MurNAc-pentapeptide onto the lipid carrier undecaprenyl phosphate, yielding undecaprenyl-pyrophosphoryl-MurNAc-pentapeptide, known as lipid I. In Clostridium perfringens (strain 13 / Type A), this protein is Phospho-N-acetylmuramoyl-pentapeptide-transferase.